A 103-amino-acid chain; its full sequence is Protein translation factor SUI1 homolog (103 aa).

The protein belongs to the SUI1 family.

The chain is Protein translation factor SUI1 homolog from Hyperthermus butylicus (strain DSM 5456 / JCM 9403 / PLM1-5).